A 253-amino-acid chain; its full sequence is Putative ankyrin repeat protein NMB1133/NMB1171 (253 aa).

2 ANK repeats span residues D196–S225 and E229–R252.

The polypeptide is Putative ankyrin repeat protein NMB1133/NMB1171 (Neisseria meningitidis serogroup B (strain ATCC BAA-335 / MC58)).